A 267-amino-acid chain; its full sequence is Membrane-spanning 4-domains subfamily A member 10 (267 aa).

The Cytoplasmic segment spans residues 1-56; it reads MAGQAPTAVPGSVTGEVSRWQNLGPAQPAQKVAQPQNLVPDGHLEKALEGSDLLQK. A helical membrane pass occupies residues 57–77; sequence LGGFHIAIAFAHLAFGGYLIS. Over 78 to 83 the chain is Extracellular; the sequence is TVKNLH. A helical membrane pass occupies residues 84-104; that stretch reads LVVLKCWYPLWGTVSFLVAGM. The Cytoplasmic segment spans residues 105–118; the sequence is AAMTTVTFPKTSLK. A helical transmembrane segment spans residues 119 to 139; it reads VLCVIANVISLFCALAGFFVI. Over 140–168 the chain is Extracellular; that stretch reads AKDLFLEGPFPWPIWRPYPEPTTYIQRLE. Residues 169–189 form a helical membrane-spanning segment; sequence LTLFCFTFLEIFLSGSTAITA. Over 190–267 the chain is Cytoplasmic; that stretch reads YRMKRLQAED…LHTGPRTLRK (78 aa).

This sequence belongs to the MS4A family. Expressed in thymus, kidney, colon, brain and testis. Expressed also by various hematopoietic and lymphoblastoid cell lines.

Its subcellular location is the membrane. May be involved in signal transduction as a component of a multimeric receptor complex. The protein is Membrane-spanning 4-domains subfamily A member 10 (Ms4a10) of Mus musculus (Mouse).